We begin with the raw amino-acid sequence, 464 residues long: Kynureninase 2 (464 aa).

Residues leucine 135, threonine 136, 163 to 166 (FPSD), aspartate 248, histidine 251, and tyrosine 273 each bind pyridoxal 5'-phosphate. N6-(pyridoxal phosphate)lysine is present on lysine 274. The pyridoxal 5'-phosphate site is built by tryptophan 313 and asparagine 341.

Belongs to the kynureninase family. As to quaternary structure, homodimer. It depends on pyridoxal 5'-phosphate as a cofactor.

It localises to the cytoplasm. The catalysed reaction is L-kynurenine + H2O = anthranilate + L-alanine + H(+). The enzyme catalyses 3-hydroxy-L-kynurenine + H2O = 3-hydroxyanthranilate + L-alanine + H(+). It participates in amino-acid degradation; L-kynurenine degradation; L-alanine and anthranilate from L-kynurenine: step 1/1. Its pathway is cofactor biosynthesis; NAD(+) biosynthesis; quinolinate from L-kynurenine: step 2/3. Functionally, catalyzes the cleavage of L-kynurenine (L-Kyn) and L-3-hydroxykynurenine (L-3OHKyn) into anthranilic acid (AA) and 3-hydroxyanthranilic acid (3-OHAA), respectively. This chain is Kynureninase 2 (bna5-2), found in Aspergillus fumigatus (strain CBS 144.89 / FGSC A1163 / CEA10) (Neosartorya fumigata).